We begin with the raw amino-acid sequence, 200 residues long: NADH-quinone oxidoreductase subunit C (200 aa).

It belongs to the complex I 30 kDa subunit family. In terms of assembly, NDH-1 is composed of 14 different subunits. Subunits NuoB, C, D, E, F, and G constitute the peripheral sector of the complex.

It is found in the cell inner membrane. The enzyme catalyses a quinone + NADH + 5 H(+)(in) = a quinol + NAD(+) + 4 H(+)(out). NDH-1 shuttles electrons from NADH, via FMN and iron-sulfur (Fe-S) centers, to quinones in the respiratory chain. The immediate electron acceptor for the enzyme in this species is believed to be ubiquinone. Couples the redox reaction to proton translocation (for every two electrons transferred, four hydrogen ions are translocated across the cytoplasmic membrane), and thus conserves the redox energy in a proton gradient. The chain is NADH-quinone oxidoreductase subunit C from Burkholderia ambifaria (strain ATCC BAA-244 / DSM 16087 / CCUG 44356 / LMG 19182 / AMMD) (Burkholderia cepacia (strain AMMD)).